The sequence spans 143 residues: Nucleoside diphosphate kinase (143 aa).

Residues K11, F59, R87, T93, R104, and N114 each contribute to the ATP site. H117 functions as the Pros-phosphohistidine intermediate in the catalytic mechanism.

The protein belongs to the NDK family. Homotetramer. Mg(2+) serves as cofactor.

Its subcellular location is the cytoplasm. It carries out the reaction dZDP + ATP = dZTP + ADP. The catalysed reaction is a 2'-deoxyribonucleoside 5'-diphosphate + ATP = a 2'-deoxyribonucleoside 5'-triphosphate + ADP. It catalyses the reaction a ribonucleoside 5'-diphosphate + ATP = a ribonucleoside 5'-triphosphate + ADP. Its pathway is purine metabolism. In terms of biological role, major role in the synthesis of nucleoside triphosphates other than ATP. The ATP gamma phosphate is transferred to the NDP beta phosphate via a ping-pong mechanism, using a phosphorylated active-site intermediate. (Microbial infection) Catalyzes the phosphorylation of dZDP to dZTP, when the bacterium is infected by a phage that produces the substrate for the synthesis of dZTP (2- amino-2'-deoxyadenosine 5'-triphosphate), which is then used by the phage as a DNA polymerase substrate. In Acinetobacter baumannii (strain AB307-0294), this protein is Nucleoside diphosphate kinase.